The primary structure comprises 298 residues: HTH-type transcriptional regulator ArgP (298 aa).

One can recognise an HTH lysR-type domain in the interval 4–60 (LDYKWIEALDAVVYQGSFERAAEHLFVSQSAISQRIKQLEKFLAQPVLIREQPPKPT). The H-T-H motif DNA-binding region spans 21–40 (FERAAEHLFVSQSAISQRIK).

The protein belongs to the LysR transcriptional regulatory family. In terms of assembly, homodimer.

Controls the transcription of genes involved in arginine and lysine metabolism. The sequence is that of HTH-type transcriptional regulator ArgP from Vibrio parahaemolyticus serotype O3:K6 (strain RIMD 2210633).